The sequence spans 215 residues: S-crystallin 3 (215 aa).

The GST N-terminal domain occupies 2 to 80; the sequence is PSYTLHYFNH…YLAREFGYHG (79 aa). Residues 82–215 form the GST C-terminal domain; that stretch reads SNMEMARVDF…YLKKRCRTDF (134 aa).

Belongs to the GST superfamily. As to expression, lens.

Its function is as follows. S-crystallins are structural components of squids and octopi eye lens. Contains relatively little if any GST activity. The sequence is that of S-crystallin 3 from Enteroctopus dofleini (North Pacific giant octopus).